We begin with the raw amino-acid sequence, 916 residues long: Alanine--tRNA ligase (916 aa).

Zn(2+)-binding residues include His-611, His-615, Cys-714, and His-718.

This sequence belongs to the class-II aminoacyl-tRNA synthetase family. Zn(2+) serves as cofactor.

It localises to the cytoplasm. It catalyses the reaction tRNA(Ala) + L-alanine + ATP = L-alanyl-tRNA(Ala) + AMP + diphosphate. Its function is as follows. Catalyzes the attachment of alanine to tRNA(Ala) in a two-step reaction: alanine is first activated by ATP to form Ala-AMP and then transferred to the acceptor end of tRNA(Ala). Also edits incorrectly charged Ser-tRNA(Ala) and Gly-tRNA(Ala) via its editing domain. The protein is Alanine--tRNA ligase of Methanospirillum hungatei JF-1 (strain ATCC 27890 / DSM 864 / NBRC 100397 / JF-1).